Here is a 243-residue protein sequence, read N- to C-terminus: Probable transcriptional regulatory protein Tbd_2215 (243 aa).

It belongs to the TACO1 family.

Its subcellular location is the cytoplasm. This chain is Probable transcriptional regulatory protein Tbd_2215, found in Thiobacillus denitrificans (strain ATCC 25259 / T1).